The following is a 334-amino-acid chain: Trans-1,2-dihydrobenzene-1,2-diol dehydrogenase (334 aa).

The protein belongs to the Gfo/Idh/MocA family. Homodimer. As to expression, small intestine.

The catalysed reaction is (1R,2R)-1,2-dihydrobenzene-1,2-diol + NADP(+) = catechol + NADPH + H(+). The enzyme catalyses D-xylose + NADP(+) = D-xylono-1,5-lactone + NADPH + H(+). The chain is Trans-1,2-dihydrobenzene-1,2-diol dehydrogenase (DHDH) from Homo sapiens (Human).